Reading from the N-terminus, the 275-residue chain is NH(3)-dependent NAD(+) synthetase (275 aa).

46 to 53 lines the ATP pocket; that stretch reads GISGGQDS. D52 lines the Mg(2+) pocket. R140 provides a ligand contact to deamido-NAD(+). Residue T160 participates in ATP binding. E165 serves as a coordination point for Mg(2+). K173 and D180 together coordinate deamido-NAD(+). Residues K189 and T211 each contribute to the ATP site. Deamido-NAD(+) is bound at residue 260 to 261; that stretch reads HK.

The protein belongs to the NAD synthetase family. In terms of assembly, homodimer.

The enzyme catalyses deamido-NAD(+) + NH4(+) + ATP = AMP + diphosphate + NAD(+) + H(+). It participates in cofactor biosynthesis; NAD(+) biosynthesis; NAD(+) from deamido-NAD(+) (ammonia route): step 1/1. In terms of biological role, catalyzes the ATP-dependent amidation of deamido-NAD to form NAD. Uses ammonia as a nitrogen source. In Escherichia coli O45:K1 (strain S88 / ExPEC), this protein is NH(3)-dependent NAD(+) synthetase.